Here is a 248-residue protein sequence, read N- to C-terminus: Large ribosomal subunit protein uL30 (248 aa).

Met1 bears the N-acetylmethionine mark. 4 tandem repeats follow at residues 7–18 (KKKEVPAVPETL), 19–30 (KKKRRNFAELKI), 31–42 (KRLRKKFAQKML), and 43–54 (RKARRKLIYEKA). Residues 7–54 (KKKEVPAVPETLKKKRRNFAELKIKRLRKKFAQKMLRKARRKLIYEKA) form a 4 X 12 AA tandem repeats region. Thr17 is modified (phosphothreonine). An N6-acetyllysine modification is found at Lys124. Lys127 is modified (N6-succinyllysine). Tyr139 bears the Phosphotyrosine mark.

This sequence belongs to the universal ribosomal protein uL30 family. In terms of assembly, component of the large ribosomal subunit. Homodimer. Interacts with DHX33.

The protein localises to the cytoplasm. Component of the large ribosomal subunit. The ribosome is a large ribonucleoprotein complex responsible for the synthesis of proteins in the cell. Binds to G-rich structures in 28S rRNA and in mRNAs. Plays a regulatory role in the translation apparatus; inhibits cell-free translation of mRNAs. The polypeptide is Large ribosomal subunit protein uL30 (RPL7) (Homo sapiens (Human)).